Here is a 670-residue protein sequence, read N- to C-terminus: DNA ligase (670 aa).

NAD(+) is bound by residues 35-39 (DSVYD), 84-85 (SL), and E116. The N6-AMP-lysine intermediate role is filled by K118. NAD(+) is bound by residues R139, E176, K293, and K317. Positions 411, 414, 429, and 435 each coordinate Zn(2+). Residues 592-670 (VVKSEIAGKT…EEAFLKLLKS (79 aa)) form the BRCT domain.

It belongs to the NAD-dependent DNA ligase family. LigA subfamily. The cofactor is Mg(2+). Mn(2+) serves as cofactor.

The catalysed reaction is NAD(+) + (deoxyribonucleotide)n-3'-hydroxyl + 5'-phospho-(deoxyribonucleotide)m = (deoxyribonucleotide)n+m + AMP + beta-nicotinamide D-nucleotide.. Functionally, DNA ligase that catalyzes the formation of phosphodiester linkages between 5'-phosphoryl and 3'-hydroxyl groups in double-stranded DNA using NAD as a coenzyme and as the energy source for the reaction. It is essential for DNA replication and repair of damaged DNA. The protein is DNA ligase of Coxiella burnetii (strain Dugway 5J108-111).